Reading from the N-terminus, the 480-residue chain is Protein nucleotidyltransferase YdiU (480 aa).

8 residues coordinate ATP: glycine 87, glycine 89, arginine 90, lysine 110, aspartate 122, glycine 123, arginine 173, and arginine 180. The active-site Proton acceptor is aspartate 249. 2 residues coordinate Mg(2+): asparagine 250 and aspartate 259. Residue aspartate 259 participates in ATP binding.

Belongs to the SELO family. It depends on Mg(2+) as a cofactor. Mn(2+) serves as cofactor.

It catalyses the reaction L-seryl-[protein] + ATP = 3-O-(5'-adenylyl)-L-seryl-[protein] + diphosphate. The enzyme catalyses L-threonyl-[protein] + ATP = 3-O-(5'-adenylyl)-L-threonyl-[protein] + diphosphate. The catalysed reaction is L-tyrosyl-[protein] + ATP = O-(5'-adenylyl)-L-tyrosyl-[protein] + diphosphate. It carries out the reaction L-histidyl-[protein] + UTP = N(tele)-(5'-uridylyl)-L-histidyl-[protein] + diphosphate. It catalyses the reaction L-seryl-[protein] + UTP = O-(5'-uridylyl)-L-seryl-[protein] + diphosphate. The enzyme catalyses L-tyrosyl-[protein] + UTP = O-(5'-uridylyl)-L-tyrosyl-[protein] + diphosphate. Functionally, nucleotidyltransferase involved in the post-translational modification of proteins. It can catalyze the addition of adenosine monophosphate (AMP) or uridine monophosphate (UMP) to a protein, resulting in modifications known as AMPylation and UMPylation. This chain is Protein nucleotidyltransferase YdiU, found in Anoxybacillus flavithermus (strain DSM 21510 / WK1).